A 100-amino-acid chain; its full sequence is Integration host factor subunit beta (100 aa).

The segment at 81–100 (KPGKELRDRVNEDEHEEAHT) is disordered. Residues 82–100 (PGKELRDRVNEDEHEEAHT) are compositionally biased toward basic and acidic residues.

Belongs to the bacterial histone-like protein family. In terms of assembly, heterodimer of an alpha and a beta chain.

In terms of biological role, this protein is one of the two subunits of integration host factor, a specific DNA-binding protein that functions in genetic recombination as well as in transcriptional and translational control. This is Integration host factor subunit beta (ihfB) from Pseudomonas putida (Arthrobacter siderocapsulatus).